A 466-amino-acid polypeptide reads, in one-letter code: MICVVIMRHQAWQSDGLPLSSSSNEACKLYDAILSQYVTWRNDETLGGIEGCITSIKAADPDFVMGHVISTGLELVGTGSSVLRDERLASAVRRTVELADTQQLTSREKNHVKAVQLFSKGALHKACEVWECILADHPTDLLALKFAHDGFFYLGEQTQMRDSVARVMPHWKPHMPLYRQIKGMYSFGLLETRLYDEAEKMAKEALSLTPEDGWSVHAVAHVHEMKAEVEKGLNFMASTEKNWTVCDMLACHNYWHWALYHIEKGNYEAALKIFDEQVSQRCVKSGAMLDIVDSCSLLYRLELEGVSVGERYRELLQVTQPHSEDHTLLFNDLHFLMVSLGSKDTGTTQRLLESLQELAKDPAENRQLQIAERVGLPMCQALLEFEQRNYRQAVELLKPIKQSFVEIGGSDAQRDVFSQLLIHAAMKSGDKEHQQLARCMLMERDAVRPNSPLTDRLIQRAHSLHA.

TPR repeat units follow at residues 175–212 (MPLY…TPED), 251–284 (CHNY…RCVK), and 368–400 (LQIA…LKPI).

This sequence belongs to the TTC38 family.

The chain is Tetratricopeptide repeat protein 38 (ttc38) from Danio rerio (Zebrafish).